A 162-amino-acid chain; its full sequence is CASP-like protein 1C1 (162 aa).

Over 1 to 7 (MFSAKAR) the chain is Cytoplasmic. The helical transmembrane segment at 8–28 (WIVAVVLRVAAAGAAAVAAVL) threads the bilayer. Topologically, residues 29–52 (MAMSHDEVIVYGMEVQAKFRYTPS) are extracellular. Residues 53–73 (LVFFVAANAAVSACSLVVLLV) form a helical membrane-spanning segment. Topologically, residues 74 to 83 (PSSTSKLAAR) are cytoplasmic. The chain crosses the membrane as a helical span at residues 84-104 (LLLMADVVLGMVLAGAFAAAG). Residues 105–135 (AMAELGKNGNSHAGWIAICVQVPLFCDRVRS) lie on the Extracellular side of the membrane. The chain crosses the membrane as a helical span at residues 136-156 (ALVAGSATIVLYYLMLMYSIY). The Cytoplasmic portion of the chain corresponds to 157 to 162 (TLPMFP).

The protein belongs to the Casparian strip membrane proteins (CASP) family. As to quaternary structure, homodimer and heterodimers.

It localises to the cell membrane. This chain is CASP-like protein 1C1, found in Oryza sativa subsp. japonica (Rice).